The chain runs to 272 residues: FAS1 domain-containing protein YDR262W (272 aa).

The first 26 residues, 1–26 (MIFNLPVSVLLYFSLIWAMEPSFVRG), serve as a signal peptide directing secretion. Positions 100 to 269 (PLSLESKLSL…GVILMVDFTL (170 aa)) constitute an FAS1 domain.

It localises to the vacuole. This Saccharomyces cerevisiae (strain ATCC 204508 / S288c) (Baker's yeast) protein is FAS1 domain-containing protein YDR262W.